A 610-amino-acid polypeptide reads, in one-letter code: UvrABC system protein C (610 aa).

One can recognise a GIY-YIG domain in the interval 16–94; the sequence is SQPGVYRMYD…IKLYQPRYNV (79 aa). Positions 204-239 constitute a UVR domain; it reads DQVLTQLIARMEKASQDLAFEEAARIRDQIQAVRRV.

This sequence belongs to the UvrC family. In terms of assembly, interacts with UvrB in an incision complex.

The protein resides in the cytoplasm. Functionally, the UvrABC repair system catalyzes the recognition and processing of DNA lesions. UvrC both incises the 5' and 3' sides of the lesion. The N-terminal half is responsible for the 3' incision and the C-terminal half is responsible for the 5' incision. This Salmonella paratyphi A (strain ATCC 9150 / SARB42) protein is UvrABC system protein C.